A 309-amino-acid polypeptide reads, in one-letter code: Methionyl-tRNA formyltransferase (309 aa).

Position 109 to 112 (109 to 112 (SLLP)) interacts with (6S)-5,6,7,8-tetrahydrofolate.

This sequence belongs to the Fmt family.

The catalysed reaction is L-methionyl-tRNA(fMet) + (6R)-10-formyltetrahydrofolate = N-formyl-L-methionyl-tRNA(fMet) + (6S)-5,6,7,8-tetrahydrofolate + H(+). In terms of biological role, attaches a formyl group to the free amino group of methionyl-tRNA(fMet). The formyl group appears to play a dual role in the initiator identity of N-formylmethionyl-tRNA by promoting its recognition by IF2 and preventing the misappropriation of this tRNA by the elongation apparatus. The protein is Methionyl-tRNA formyltransferase of Clostridium perfringens (strain 13 / Type A).